The following is a 381-amino-acid chain: ADP,ATP carrier protein 1, mitochondrial (381 aa).

Residues 1–70 (MVDQVQHPTI…ATTASPVFVQ (70 aa)) constitute a mitochondrion transit peptide. 3 Solcar repeats span residues 78–171 (TNFA…FKRL), 183–276 (KWFA…VKPV), and 284–370 (DSFF…LQLI). 5 helical membrane passes run 80–107 (FALD…VKLL), 148–172 (TANV…KRLF), 181–201 (YWKW…SSLL), 252–273 (FNIS…YDSV), and 287–307 (FASF…SYPI). The ADP site is built by Arg-153 and Lys-165. Arg-311 provides a ligand contact to ADP. The interval 311-316 (RRRMMM) is important for transport activity. Residues 311 to 316 (RRRMMM) carry the Nucleotide carrier signature motif motif. Residues 347 to 367 (AGANILRAVAGAGVLSGYDKL) traverse the membrane as a helical segment.

Belongs to the mitochondrial carrier (TC 2.A.29) family. In terms of assembly, monomer.

The protein resides in the mitochondrion inner membrane. It carries out the reaction ADP(in) + ATP(out) = ADP(out) + ATP(in). Its activity is regulated as follows. The matrix-open state (m-state) is inhibited by the membrane-permeable bongkrekic acid (BKA). The cytoplasmic-open state (c-state) is inhibited by the membrane-impermeable toxic inhibitor carboxyatractyloside (CATR). Its function is as follows. ADP:ATP antiporter that mediates import of ADP into the mitochondrial matrix for ATP synthesis, and export of ATP out to fuel the cell. Cycles between the cytoplasmic-open state (c-state) and the matrix-open state (m-state): operates by the alternating access mechanism with a single substrate-binding site intermittently exposed to either the cytosolic (c-state) or matrix (m-state) side of the inner mitochondrial membrane. The sequence is that of ADP,ATP carrier protein 1, mitochondrial (AAC1) from Arabidopsis thaliana (Mouse-ear cress).